The sequence spans 267 residues: 2-keto-3-deoxy-L-rhamnonate aldolase (267 aa).

H49 functions as the Proton acceptor in the catalytic mechanism. Residue Q151 coordinates substrate. E153 is a binding site for Mg(2+). Substrate contacts are provided by A178 and D179. D179 contacts Mg(2+).

Belongs to the HpcH/HpaI aldolase family. KDR aldolase subfamily. Homohexamer. Mg(2+) is required as a cofactor.

The enzyme catalyses 2-dehydro-3-deoxy-L-rhamnonate = (S)-lactaldehyde + pyruvate. Catalyzes the reversible retro-aldol cleavage of 2-keto-3-deoxy-L-rhamnonate (KDR) to pyruvate and lactaldehyde. This is 2-keto-3-deoxy-L-rhamnonate aldolase from Salmonella typhi.